The following is a 359-amino-acid chain: 4-galactosyl-N-acetylglucosaminide 3-alpha-L-fucosyltransferase 9 (359 aa).

At M1–P11 the chain is on the cytoplasmic side. The chain crosses the membrane as a helical; Signal-anchor for type II membrane protein span at residues F12 to P32. The Lumenal portion of the chain corresponds to T33–N359. N62 carries N-linked (GlcNAc...) asparagine glycosylation. The acceptor-binding stretch occupies residues E63–Y168. Q75 serves as a coordination point for a beta-D-galactosyl-(1-&gt;4)-N-acetyl-beta-D-glucosaminyl derivative. Intrachain disulfides connect C82–C335, C91–C338, and C190–C238. N101 carries N-linked (GlcNAc...) asparagine glycosylation. E137 is an a beta-D-galactosyl-(1-&gt;4)-N-acetyl-beta-D-glucosaminyl derivative binding site. E137 serves as the catalytic Nucleophile. E137 contacts GDP-beta-L-fucose. N153 carries N-linked (GlcNAc...) asparagine glycosylation. Positions 168, 192, 194, 195, 202, 226, 241, 246, 252, 255, and 256 each coordinate GDP-beta-L-fucose. A donor-binding region spans residues G169–L326. An acceptor-binding region spans residues P327–N359.

The protein belongs to the glycosyltransferase 10 family. As to quaternary structure, homodimer. N-glycosylated with complex-type N-glycans.

The protein resides in the golgi apparatus. The protein localises to the trans-Golgi network membrane. It is found in the golgi apparatus membrane. It catalyses the reaction a beta-D-galactosyl-(1-&gt;4)-N-acetyl-beta-D-glucosaminyl derivative + GDP-beta-L-fucose = a beta-D-galactosyl-(1-&gt;4)-[alpha-L-fucosyl-(1-&gt;3)]-N-acetyl-beta-D-glucosaminyl derivative + GDP + H(+). The enzyme catalyses an alpha-Neu5Ac-(2-&gt;3)-beta-D-Gal-(1-&gt;4)-beta-D-GlcNAc-(1-&gt;3)-beta-D-Gal-(1-&gt;4)-beta-D-GlcNAc derivative + GDP-beta-L-fucose = an alpha-Neu5Ac-(2-&gt;3)-beta-D-Gal-(1-&gt;4)-beta-D-GlcNAc-(1-&gt;3)-beta-D-Gal-(1-&gt;4)-[alpha-L-Fuc-(1-&gt;3)]-beta-D-GlcNAc derivative + GDP + H(+). It carries out the reaction alpha-N-glycoloylneuraminosyl-(2-&gt;3)-beta-D-galactosyl-(1-&gt;4)-N-acetyl-beta-D-glucosaminyl-(1-&gt;3)-beta-D-galactosyl-(1-&gt;4)-N-acetyl-beta-D-glucosaminyl-(1-&gt;3)-beta-D-galactosyl-(1-&gt;4)-beta-D-glucosyl-(1&lt;-&gt;1')-ceramide + GDP-beta-L-fucose = alpha-N-glycoloylneuraminosyl-(2-&gt;3)-beta-D-galactosyl-(1-&gt;4)-N-acetyl-beta-D-glucosaminyl-(1-&gt;3)-beta-D-galactosyl-(1-&gt;4)-[alpha-L-fucosyl-(1-&gt;3)]-N-acetyl-beta-D-glucosaminyl-(1-&gt;3)-beta-D-galactosyl-(1-&gt;4)-beta-D-glucosyl-(1&lt;-&gt;1')-ceramide + GDP + H(+). The catalysed reaction is alpha-D-galactosyl-(1-&gt;3)-beta-D-galactosyl-(1-&gt;4)-N-acetyl-beta-D-glucosaminyl-(1-&gt;3)-beta-D-galactosyl-(1-&gt;4)-beta-D-glucosyl-(1&lt;-&gt;1')-ceramide + GDP-beta-L-fucose = a neolactoside IV(3)-alpha-Gal,III(3)-alpha-Fuc-nLc4Cer + GDP + H(+). It catalyses the reaction a neolactoside nLc4Cer + GDP-beta-L-fucose = a neolactoside III(3)-alpha-Fuc-nLc4Cer + GDP + H(+). The enzyme catalyses an N-acetyl-alpha-neuraminyl-(2-&gt;3)-beta-D-galactosyl-(1-&gt;4)-N-acetyl-beta-D-glucosaminyl derivative + GDP-beta-L-fucose = an alpha-Neu5Ac-(2-&gt;3)-beta-D-Gal-(1-&gt;4)-[alpha-L-Fuc-(1-&gt;3)]-beta-D-GlcNAc derivative + GDP + H(+). It carries out the reaction beta-D-Gal-(1-&gt;4)-beta-D-GlcNAc-(1-&gt;3)-beta-D-Gal-(1-&gt;4)-D-Glc + GDP-beta-L-fucose = beta-D-Gal-(1-&gt;4)-[alpha-L-Fuc-(1-&gt;3)]-beta-D-GlcNAc-(1-&gt;3)-beta-D-Gal-(1-&gt;4)-D-Glc + GDP + H(+). The catalysed reaction is an alpha-L-Fuc-(1-&gt;2)-beta-D-Gal-(1-&gt;4)-beta-D-GlcNAc derivative + GDP-beta-L-fucose = an alpha-L-Fuc-(1-&gt;2)-beta-D-Gal-(1-&gt;4)-[alpha-L-Fuc-(1-&gt;3)]-beta-D-GlcNAc derivative + GDP + H(+). The protein operates within protein modification; protein glycosylation. It functions in the pathway glycolipid biosynthesis. Activated by Mn2+. In terms of biological role, catalyzes alpha(1-&gt;3) linkage of fucosyl moiety transferred from GDP-beta-L-fucose to N-acetyl glucosamine (GlcNAc) within type 2 lactosamine (LacNAc, beta-D-Gal-(1-&gt;4)-beta-D-GlcNAc-) glycan attached to glycolipids and N- or O-linked glycoproteins. Fucosylates distal type 2 LacNAc and its fucosylated (H-type 2 LacNAc) and sialylated (sialyl-type 2 LacNAc) derivatives to form Lewis x (Lex) (CD15) and Lewis y (Ley) antigenic epitopes involved in cell adhesion and differentiation. Generates Lex epitopes in the brain, presumably playing a role in the maintenance of neuronal stemness and neurite outgrowth in progenitor neural cells. Fucosylates the internal type 2 LacNAc unit of the polylactosamine chain to form VIM-2 antigen that serves as recognition epitope for SELE. Can also modify milk oligosaccharides in particular type 2 tetrasaccharide LNnT. The sequence is that of 4-galactosyl-N-acetylglucosaminide 3-alpha-L-fucosyltransferase 9 from Rattus norvegicus (Rat).